The chain runs to 518 residues: Ribonuclease Y (518 aa).

Residues 2–22 (GSIIISALLALVIGAVVGFFV) form a helical membrane-spanning segment. A KH domain is found at 208–271 (TVSVVNLPND…ETARIALDKL (64 aa)). Residues 334–427 (VLKHSVEVAF…VAAADALSAA (94 aa)) enclose the HD domain.

Belongs to the RNase Y family.

The protein resides in the cell membrane. Functionally, endoribonuclease that initiates mRNA decay. The sequence is that of Ribonuclease Y from Geobacillus kaustophilus (strain HTA426).